The following is a 252-amino-acid chain: Carboxy-S-adenosyl-L-methionine synthase (252 aa).

S-adenosyl-L-methionine is bound by residues Tyr-45, 70–72 (GCS), 95–96 (DN), 127–128 (DI), Asn-142, and Arg-209.

It belongs to the class I-like SAM-binding methyltransferase superfamily. Cx-SAM synthase family. In terms of assembly, homodimer.

It catalyses the reaction prephenate + S-adenosyl-L-methionine = carboxy-S-adenosyl-L-methionine + 3-phenylpyruvate + H2O. Its function is as follows. Catalyzes the conversion of S-adenosyl-L-methionine (SAM) to carboxy-S-adenosyl-L-methionine (Cx-SAM). This chain is Carboxy-S-adenosyl-L-methionine synthase, found in Pseudomonas paraeruginosa (strain DSM 24068 / PA7) (Pseudomonas aeruginosa (strain PA7)).